The following is a 507-amino-acid chain: TOM1-like protein 2 (507 aa).

Residues 20-152 form the VHS domain; the sequence is ATDGSLQSED…ELKRKGVEFP (133 aa). Ser-160 is subject to Phosphoserine. The tract at residues 162–210 is disordered; sequence IHTPQRSVPEVDPAATMPRSQSQQRTSAGSYSSPPPAPYSAPQAPALSV. Residue Thr-164 is modified to Phosphothreonine. Residues 219–307 enclose the GAT domain; the sequence is EQIARLRSEL…VFLRYERFER (89 aa). The Clathrin-binding motif lies at 329–334; it reads NLIDLG. A disordered region spans residues 467–507; the sequence is RAKAAEMVPDLPSPPMEAPAPASNPSGRKKPERSEDALFAL. Residues 498–507 show a composition bias toward basic and acidic residues; that stretch reads ERSEDALFAL.

This sequence belongs to the TOM1 family. Interacts with clathrin, SRC and TOLLIP. Interacts with MYO6. In terms of tissue distribution, ubiquitously expressed with higher expression in heart and skeletal muscle.

Functionally, acts as a MYO6/Myosin VI adapter protein that targets myosin VI to endocytic structures. May also play a role in recruiting clathrin to endosomes. May regulate growth factor-induced mitogenic signaling. The protein is TOM1-like protein 2 (TOM1L2) of Homo sapiens (Human).